Consider the following 371-residue polypeptide: GTPase Obg (371 aa).

Residues 1–159 form the Obg domain; it reads MKFVDEAYID…KNLKLELKVL (159 aa). Residues 160–334 form the OBG-type G domain; that stretch reads ADVGLLGMPN…LIRTIYKHVH (175 aa). Residues 166 to 173, 191 to 195, 213 to 216, 284 to 287, and 315 to 317 contribute to the GTP site; these read GMPNAGKS, FTTLH, DIPG, NKLD, and SAL. Mg(2+)-binding residues include S173 and T193.

The protein belongs to the TRAFAC class OBG-HflX-like GTPase superfamily. OBG GTPase family. Monomer. It depends on Mg(2+) as a cofactor.

The protein localises to the cytoplasm. An essential GTPase which binds GTP, GDP and possibly (p)ppGpp with moderate affinity, with high nucleotide exchange rates and a fairly low GTP hydrolysis rate. Plays a role in control of the cell cycle, stress response, ribosome biogenesis and in those bacteria that undergo differentiation, in morphogenesis control. The chain is GTPase Obg from Delftia acidovorans (strain DSM 14801 / SPH-1).